Consider the following 367-residue polypeptide: Flagellar P-ring protein (367 aa).

The N-terminal stretch at 1-21 (MYVFKALAGIVLALVATLAHA) is a signal peptide.

The protein belongs to the FlgI family. In terms of assembly, the basal body constitutes a major portion of the flagellar organelle and consists of four rings (L,P,S, and M) mounted on a central rod.

It localises to the periplasm. It is found in the bacterial flagellum basal body. Assembles around the rod to form the L-ring and probably protects the motor/basal body from shearing forces during rotation. The chain is Flagellar P-ring protein from Salmonella choleraesuis (strain SC-B67).